Here is a 635-residue protein sequence, read N- to C-terminus: Protein MICRORCHIDIA 1 (635 aa).

The segment at 491–511 (RTVIPDQPPTVNTYNPSPLPS) is disordered. Residues 588 to 635 (MRCEEYVKKENEVEQTVKSLEKELEEIKSKCAQLALLVDAKKKEMQQV) adopt a coiled-coil conformation.

It belongs to the MORC ATPase protein family. As to quaternary structure, homodimer and heterodimer with MORC6. Component of an RNA-directed DNA methylation (RdDM) complex that contains at least MORC6, MORC1/CRT1, MORC2, SWI3D and SUVH9. Binds directly to SUVH2 and SUVH9. Interacts with the resistance proteins RCY1, RPM1, SNC1, RPP8, SSI4 and RPS2. The interactions with various resistance proteins are disrupted when these resistance proteins are activated. Interacts with the PAMP recognition receptor FLS2. Mg(2+) serves as cofactor. Mn(2+) is required as a cofactor. Expressed constitutively.

The protein localises to the nucleus. The protein resides in the endosome. Mediator of defense signaling triggered by distinct classes of R proteins. Required during hypersensitive response (HR) that confers disease resistance to turnip crinkle virus (TCV). Exhibits ATPase activity. Contributes to resistance against Pseudomonas syringae and Hyaloperonospora arabidopsidis, at early stages prior to cytosolic calcium ions Ca(2+) accumulation. Required for pathogen-associated molecular pattern (PAMP)-triggered immunity (PTI), basal resistance, non-host resistance and systemic acquired resistance (SAR). Binds DNA/RNA in a non-specific manner and exhibits endonuclease activity. Probably involved in DNA repair. Required for both RPP8- and SSI4-mediated resistance responses, thus being involved in both TIR- and CC-NB-LRR pathways. Involved in RNA-directed DNA methylation (RdDM) as a component of the RdDM machinery and required for gene silencing. May also be involved in the regulation of chromatin architecture to maintain gene silencing. In Arabidopsis thaliana (Mouse-ear cress), this protein is Protein MICRORCHIDIA 1.